The following is a 143-amino-acid chain: Large ribosomal subunit protein uL13 (143 aa).

Belongs to the universal ribosomal protein uL13 family. As to quaternary structure, part of the 50S ribosomal subunit.

Functionally, this protein is one of the early assembly proteins of the 50S ribosomal subunit, although it is not seen to bind rRNA by itself. It is important during the early stages of 50S assembly. This chain is Large ribosomal subunit protein uL13, found in Chloroflexus aggregans (strain MD-66 / DSM 9485).